Here is a 316-residue protein sequence, read N- to C-terminus: Transaldolase (316 aa).

Lysine 125 serves as the catalytic Schiff-base intermediate with substrate.

Belongs to the transaldolase family. Type 1 subfamily. Homodimer.

It localises to the cytoplasm. The enzyme catalyses D-sedoheptulose 7-phosphate + D-glyceraldehyde 3-phosphate = D-erythrose 4-phosphate + beta-D-fructose 6-phosphate. Its pathway is carbohydrate degradation; pentose phosphate pathway; D-glyceraldehyde 3-phosphate and beta-D-fructose 6-phosphate from D-ribose 5-phosphate and D-xylulose 5-phosphate (non-oxidative stage): step 2/3. In terms of biological role, transaldolase is important for the balance of metabolites in the pentose-phosphate pathway. This chain is Transaldolase, found in Acidovorax ebreus (strain TPSY) (Diaphorobacter sp. (strain TPSY)).